A 172-amino-acid chain; its full sequence is Putative methyltransferase Mtx subunit A (172 aa).

Belongs to the MtrA family. May be part of a complex composed of 3 subunits; MtxA, MtxH and MtxX.

This chain is Putative methyltransferase Mtx subunit A (mtxA), found in Methanosarcina mazei (strain ATCC BAA-159 / DSM 3647 / Goe1 / Go1 / JCM 11833 / OCM 88) (Methanosarcina frisia).